Here is a 957-residue protein sequence, read N- to C-terminus: Iron-responsive element-binding protein 2 (957 aa).

[4Fe-4S] cluster-binding residues include Cys-506, Cys-572, and Cys-575.

It belongs to the aconitase/IPM isomerase family. It depends on [4Fe-4S] cluster as a cofactor. In terms of processing, ubiquitinated and degraded by the proteasome in presence of high level of iron and oxygen.

Its subcellular location is the cytoplasm. Functionally, RNA-binding protein that binds to iron-responsive elements (IRES), which are stem-loop structures found in the 5'-UTR of ferritin, and delta aminolevulinic acid synthase mRNAs, and in the 3'-UTR of transferrin receptor mRNA. Binding to the IRE element in ferritin results in the repression of its mRNA translation. Binding of the protein to the transferrin receptor mRNA inhibits the degradation of this otherwise rapidly degraded mRNA. This chain is Iron-responsive element-binding protein 2 (ireb2), found in Xenopus tropicalis (Western clawed frog).